A 142-amino-acid chain; its full sequence is Large ribosomal subunit protein uL13 (142 aa).

This sequence belongs to the universal ribosomal protein uL13 family. As to quaternary structure, part of the 50S ribosomal subunit.

This protein is one of the early assembly proteins of the 50S ribosomal subunit, although it is not seen to bind rRNA by itself. It is important during the early stages of 50S assembly. The protein is Large ribosomal subunit protein uL13 of Acholeplasma laidlawii (strain PG-8A).